Consider the following 468-residue polypeptide: O-methyltransferase lcsG (468 aa).

Positions 1 to 12 (MGDNVQSDTTAA) are enriched in polar residues. The interval 1-29 (MGDNVQSDTTAAQAGITDAPTAPTSAPVS) is disordered. S-adenosyl-L-methionine contacts are provided by residues 298-299 (GG), Asp-321, 348-349 (DF), and Lys-363.

The protein belongs to the class I-like SAM-binding methyltransferase superfamily. Cation-independent O-methyltransferase family.

Its pathway is secondary metabolite biosynthesis. O-methyltransferase; part of the gene cluster that mediates the biosynthesis of the lipopeptide antibiotics leucinostatins that show extensive biological activities, including antimalarial, antiviral, antibacterial, antifungal, and antitumor activities, as well as phytotoxic. Leucinostatin A contains nine amino acid residues, including the unusual amino acid 4-methyl-L-proline (MePro), 2-amino-6-hydroxy-4-methyl-8-oxodecanoic acid (AHyMeOA), 3-hydroxyleucine (HyLeu), alpha-aminoisobutyric acid (AIB), beta-Ala, a 4-methylhex-2-enoic acid at the N-terminus as well as a N1,N1-dimethylpropane-1,2-diamine (DPD) at the C-terminus. The biosynthesis of leucinostatins is probably initiated with the assembly of 4-methylhex-2-enoic acid by a reducing PKS. Two reducing polyketide synthases, lcsB and lcsC, have been identified in the cluster and it is not clear which is the one that assembles 4-methylhex-2-enoic acid since both contain KS, AT, DH, cMT, ER, KR and ACP domains. The polyketide residue might be transferred to the NRPS lcsA, mediated by two additional enzymes, the acyl-CoA ligase lcsD and the thioesterase lcsE. The linear polyketide carboxylic acid, which is released from PKS, is converted to a CoA thioester by lcsD, and then lcsE hydrolyzes the thiol bond and shuttles the polyketide intermediate to lcsA. The C domain of the first module catalyzed the condensation of 4-methylhex-2-enoic acid and MePro carried by domain A1, followed by successive condensations of nine amino acids to trigger the elongation of the linear peptide. A5 and A6 domains of lcsA are proposed to incorporate leucine, A2 AHyMeOA, and A3 incorporates HyLeu. A4, A7 and A8 incorporate AIB. The AHyMeOA in leucinostatin A activated by the A2 might be produced by the second PKS (lcsB or lcsC) present within the cluster. The MePro is probably produced via leucine cyclization and may originate from a separate pathway, independent of the cluster. Another nonproteinogenic amino acid, beta-Ala, could be produced by an aspartic acid decarboxylase also localized outside of the cluster. Two candidates are VFPBJ_01400 and VFPBJ_10476. The final peptide scaffold may be released by the NAD(P)H-dependent thioester reductase (TE) at the C-terminal region of lcsA. Transamination of the lcsA product by the transaminase lcsP may produce DPD at the C-terminus. Further hydroxylation steps performed alternatively by the cytochrome P450 monooxygenases lcsI, lcsK and lcsN then yield the non-methylated leucinostatins precursor. It is also possible that leucines can be hydroxylated prior to their incorporation into the peptide. Varying extents of methylation then lead to the formation of leucinostatins A and B. This is O-methyltransferase lcsG from Purpureocillium lilacinum (Paecilomyces lilacinus).